The sequence spans 610 residues: Pentatricopeptide repeat-containing protein At5g40400 (610 aa).

PPR repeat units follow at residues aspartate 165–valine 199, serine 200–proline 234, asparagine 235–proline 269, aspartate 270–proline 304, aspartate 305–proline 339, aspartate 340–proline 374, aspartate 375–isoleucine 409, proline 410–alanine 445, lysine 446–leucine 480, aspartate 481–proline 515, aspartate 516–glutamate 546, and aspartate 551–proline 586.

Belongs to the PPR family. P subfamily.

This is Pentatricopeptide repeat-containing protein At5g40400 from Arabidopsis thaliana (Mouse-ear cress).